A 914-amino-acid chain; its full sequence is Translation initiation factor IF-2 (914 aa).

Disordered regions lie at residues 52 to 84 and 98 to 326; these read GGGK…VKAP and AGGN…GVRL. Residues 57–68 show a composition bias toward low complexity; sequence AEGAAKAPAKAA. The segment covering 69 to 84 has biased composition (basic and acidic residues); that stretch reads AKGDAKTAAKGDVKAP. Residues 98–138 show a composition bias toward low complexity; sequence AGGNGEAAAPPAQPGGTATTPAAQATPEAPARPGPAAARPS. 2 stretches are compositionally biased toward pro residues: residues 139–169 and 193–207; these read APAP…PAPK and PRPV…PGAP. Residues 236–296 show a composition bias toward gly residues; that stretch reads RPGGGRPGGP…GAAGAFGRPG (61 aa). Residues 300-309 show a composition bias toward basic residues; sequence RRGRKSKRQK. One can recognise a tr-type G domain in the interval 421–581; that stretch reads TRPPVVTVMG…AVLLTADAAL (161 aa). GTP is bound by residues 430-437, 469-473, and 523-526; these read GHVDHGKT, DTPGH, and NKID.

It belongs to the TRAFAC class translation factor GTPase superfamily. Classic translation factor GTPase family. IF-2 subfamily.

The protein resides in the cytoplasm. Functionally, one of the essential components for the initiation of protein synthesis. Protects formylmethionyl-tRNA from spontaneous hydrolysis and promotes its binding to the 30S ribosomal subunits. Also involved in the hydrolysis of GTP during the formation of the 70S ribosomal complex. The chain is Translation initiation factor IF-2 from Mycobacterium avium (strain 104).